The following is a 247-amino-acid chain: Carboxy-S-adenosyl-L-methionine synthase (247 aa).

S-adenosyl-L-methionine is bound by residues Tyr-40, 65–67 (GAS), 90–91 (DN), 122–123 (DI), Asn-137, and Arg-204.

It belongs to the class I-like SAM-binding methyltransferase superfamily. Cx-SAM synthase family. In terms of assembly, homodimer.

The catalysed reaction is prephenate + S-adenosyl-L-methionine = carboxy-S-adenosyl-L-methionine + 3-phenylpyruvate + H2O. Functionally, catalyzes the conversion of S-adenosyl-L-methionine (SAM) to carboxy-S-adenosyl-L-methionine (Cx-SAM). In Pseudomonas putida (strain ATCC 47054 / DSM 6125 / CFBP 8728 / NCIMB 11950 / KT2440), this protein is Carboxy-S-adenosyl-L-methionine synthase.